Reading from the N-terminus, the 546-residue chain is Probable protein kinase UbiB (546 aa).

The 379-residue stretch at D124–L502 folds into the Protein kinase domain. ATP-binding positions include L130–V138 and K153. The active-site Proton acceptor is D288. 2 helical membrane passes run S499–S519 and V521–G541.

Belongs to the ABC1 family. UbiB subfamily.

The protein localises to the cell inner membrane. It functions in the pathway cofactor biosynthesis; ubiquinone biosynthesis [regulation]. Is probably a protein kinase regulator of UbiI activity which is involved in aerobic coenzyme Q (ubiquinone) biosynthesis. The protein is Probable protein kinase UbiB of Pectobacterium carotovorum subsp. carotovorum (strain PC1).